The sequence spans 74 residues: MAPPTTIRTRDQALAPLATLDSQTNCRLKELVQWECQFKGAEYVCSPFKRLFEHCIAPDKSATNYEVTDTYTNS.

In terms of assembly, component of the mitochondrial inner membrane peptidase (IMP) complex which at least consists of IMP1, IMP2 and SOM1.

The protein localises to the mitochondrion inner membrane. In terms of biological role, non-catalytic component of the mitochondrial inner membrane peptidase (IMP) complex. IMP catalyzes the removal of signal peptides required for the targeting of proteins from the mitochondrial matrix, across the inner membrane, into the inter-membrane space. SOM1 facilitates cleavage of a subset of IMP substrates. This is Protein SOM1, mitochondrial (SOM1) from Saccharomyces cerevisiae (strain ATCC 204508 / S288c) (Baker's yeast).